Consider the following 266-residue polypeptide: Putative carbamate hydrolase RutD (266 aa).

Belongs to the AB hydrolase superfamily. Hydrolase RutD family.

It catalyses the reaction carbamate + 2 H(+) = NH4(+) + CO2. Involved in pyrimidine catabolism. May facilitate the hydrolysis of carbamate, a reaction that can also occur spontaneously. This chain is Putative carbamate hydrolase RutD, found in Escherichia coli O111:H- (strain 11128 / EHEC).